We begin with the raw amino-acid sequence, 311 residues long: Apulose-4-phosphate transketolase subunit B (311 aa).

Belongs to the transketolase family. In terms of assembly, probable heterodimer composed of AptA and AptB. Requires thiamine diphosphate as cofactor.

The catalysed reaction is apulose 4-phosphate + D-glyceraldehyde 3-phosphate = D-xylulose 5-phosphate + dihydroxyacetone phosphate. The protein operates within carbohydrate metabolism. In terms of biological role, involved in catabolism of D-apiose. Catalyzes the transfer of the glycolaldehyde group from apulose-4-phosphate to D-glyceraldehyde 3-phosphate, generating dihydroxyacetone phosphate and D-xylulose-5-phosphate. The chain is Apulose-4-phosphate transketolase subunit B from Actinobacillus succinogenes (strain ATCC 55618 / DSM 22257 / CCUG 43843 / 130Z).